Consider the following 301-residue polypeptide: Securin (301 aa).

Disordered stretches follow at residues 1–55 (MLPR…RTVL), 82–120 (DSPT…DTPL), and 218–284 (ASDQ…RSIH). Positions 33–36 (RAPL) match the D-box 1 motif. Positions 38–50 (STKQSNAPSSVTV) are enriched in polar residues. A D-box 2 motif is present at residues 52-55 (RTVL). Polar residues-rich tracts occupy residues 88–98 (EPNSQGISRSA), 110–119 (PRRSSLTDTP), and 231–245 (VSKQ…STVY). 2 repeats span residues 250–260 (ASGKSIPRPLS) and 270–280 (ASGNSRRRPLS).

The protein belongs to the securin family. In terms of assembly, interacts with the caspase-like cut1, and prevents its protease activity probably by covering its active site. Ubiquitinated by the anaphase promoting complex (APC) at the onset of anaphase, conducting to its degradation.

The protein resides in the cytoplasm. It localises to the nucleus. In terms of biological role, regulatory protein, which plays a central role in chromosome stability. Probably acts by blocking the action of key proteins. During the mitosis, it blocks separase/cut1 function, preventing the proteolysis of the cohesin complex and the subsequent segregation of the chromosomes. At the onset of anaphase, it is ubiquitinated, conducting to its destruction and to the liberation of cut1. This Schizosaccharomyces pombe (strain 972 / ATCC 24843) (Fission yeast) protein is Securin (cut2).